Here is a 364-residue protein sequence, read N- to C-terminus: UDP-N-acetylglucosamine--N-acetylmuramyl-(pentapeptide) pyrophosphoryl-undecaprenol N-acetylglucosamine transferase (364 aa).

UDP-N-acetyl-alpha-D-glucosamine-binding positions include 10-12 (TGG), Asn128, Arg170, Ser199, Ile250, and Gln295.

This sequence belongs to the glycosyltransferase 28 family. MurG subfamily.

The protein resides in the cell inner membrane. The enzyme catalyses di-trans,octa-cis-undecaprenyl diphospho-N-acetyl-alpha-D-muramoyl-L-alanyl-D-glutamyl-meso-2,6-diaminopimeloyl-D-alanyl-D-alanine + UDP-N-acetyl-alpha-D-glucosamine = di-trans,octa-cis-undecaprenyl diphospho-[N-acetyl-alpha-D-glucosaminyl-(1-&gt;4)]-N-acetyl-alpha-D-muramoyl-L-alanyl-D-glutamyl-meso-2,6-diaminopimeloyl-D-alanyl-D-alanine + UDP + H(+). Its pathway is cell wall biogenesis; peptidoglycan biosynthesis. Its function is as follows. Cell wall formation. Catalyzes the transfer of a GlcNAc subunit on undecaprenyl-pyrophosphoryl-MurNAc-pentapeptide (lipid intermediate I) to form undecaprenyl-pyrophosphoryl-MurNAc-(pentapeptide)GlcNAc (lipid intermediate II). This Chlorobaculum tepidum (strain ATCC 49652 / DSM 12025 / NBRC 103806 / TLS) (Chlorobium tepidum) protein is UDP-N-acetylglucosamine--N-acetylmuramyl-(pentapeptide) pyrophosphoryl-undecaprenol N-acetylglucosamine transferase.